We begin with the raw amino-acid sequence, 302 residues long: tRNA pseudouridine synthase B (302 aa).

Asp47 acts as the Nucleophile in catalysis.

Belongs to the pseudouridine synthase TruB family. Type 1 subfamily.

The enzyme catalyses uridine(55) in tRNA = pseudouridine(55) in tRNA. Functionally, responsible for synthesis of pseudouridine from uracil-55 in the psi GC loop of transfer RNAs. The protein is tRNA pseudouridine synthase B of Methylobacillus flagellatus (strain ATCC 51484 / DSM 6875 / VKM B-1610 / KT).